A 120-amino-acid chain; its full sequence is Large ribosomal subunit protein eL34 (120 aa).

This sequence belongs to the eukaryotic ribosomal protein eL34 family.

In Pisum sativum (Garden pea), this protein is Large ribosomal subunit protein eL34 (RPL34).